Reading from the N-terminus, the 180-residue chain is Acireductone dioxygenase (180 aa).

H97, H99, E103, and H141 together coordinate Fe(2+). Positions 97, 99, 103, and 141 each coordinate Ni(2+).

This sequence belongs to the acireductone dioxygenase (ARD) family. Monomer. Fe(2+) is required as a cofactor. Ni(2+) serves as cofactor.

It carries out the reaction 1,2-dihydroxy-5-(methylsulfanyl)pent-1-en-3-one + O2 = 3-(methylsulfanyl)propanoate + CO + formate + 2 H(+). It catalyses the reaction 1,2-dihydroxy-5-(methylsulfanyl)pent-1-en-3-one + O2 = 4-methylsulfanyl-2-oxobutanoate + formate + 2 H(+). It participates in amino-acid biosynthesis; L-methionine biosynthesis via salvage pathway; L-methionine from S-methyl-5-thio-alpha-D-ribose 1-phosphate: step 5/6. Its function is as follows. Catalyzes 2 different reactions between oxygen and the acireductone 1,2-dihydroxy-3-keto-5-methylthiopentene (DHK-MTPene) depending upon the metal bound in the active site. Fe-containing acireductone dioxygenase (Fe-ARD) produces formate and 2-keto-4-methylthiobutyrate (KMTB), the alpha-ketoacid precursor of methionine in the methionine recycle pathway. Ni-containing acireductone dioxygenase (Ni-ARD) produces methylthiopropionate, carbon monoxide and formate, and does not lie on the methionine recycle pathway. The protein is Acireductone dioxygenase of Klebsiella pneumoniae subsp. pneumoniae (strain ATCC 700721 / MGH 78578).